Reading from the N-terminus, the 1742-residue chain is NACHT and WD repeat domain-containing protein 2 (1742 aa).

5 LRR repeats span residues 386–410 (FYEY…GHIN), 677–698 (LEDV…TRPS), 724–747 (VKNV…LYLQ), 883–906 (YSQE…VIAF), and 925–953 (LPKL…SSMD). Residues 410-737 (NPLVVYGGPC…TLLVWANRHL (328 aa)) enclose the NACHT domain. 11 WD repeats span residues 963-1004 (LASS…LLRQ), 1007-1046 (TAQS…LLSE), 1140-1179 (FSGG…NPQL), 1229-1271 (RHNE…ASLQ), 1272-1311 (ESSG…AMSN), 1314-1353 (KTGK…IEAV), 1355-1394 (KHEG…NLFR), 1396-1434 (NGQR…RVCN), 1476-1516 (EDGI…ICRR), 1522-1561 (NFLK…LRVV), and 1614-1653 (SLYK…DAAL). Positions 1702 to 1721 (PITVSDSSESNEATPSKKHN) are disordered. The segment covering 1703 to 1715 (ITVSDSSESNEAT) has biased composition (polar residues).

The sequence is that of NACHT and WD repeat domain-containing protein 2 (Nwd2) from Mus musculus (Mouse).